We begin with the raw amino-acid sequence, 72 residues long: Large ribosomal subunit protein uL29 (72 aa).

This sequence belongs to the universal ribosomal protein uL29 family.

The chain is Large ribosomal subunit protein uL29 from Prochlorococcus marinus (strain MIT 9312).